The chain runs to 526 residues: Phosphoenolpyruvate carboxylase (526 aa).

This sequence belongs to the PEPCase type 2 family. As to quaternary structure, homotetramer. The cofactor is Mg(2+).

The catalysed reaction is oxaloacetate + phosphate = phosphoenolpyruvate + hydrogencarbonate. Its function is as follows. Catalyzes the irreversible beta-carboxylation of phosphoenolpyruvate (PEP) to form oxaloacetate (OAA), a four-carbon dicarboxylic acid source for the tricarboxylic acid cycle. This Methanosarcina barkeri (strain Fusaro / DSM 804) protein is Phosphoenolpyruvate carboxylase.